A 171-amino-acid polypeptide reads, in one-letter code: uncharacterized protein (171 aa).

This sequence belongs to the IUNH family.

This is an uncharacterized protein from Acidianus ambivalens (Desulfurolobus ambivalens).